We begin with the raw amino-acid sequence, 304 residues long: Glycine--tRNA ligase alpha subunit (304 aa).

Belongs to the class-II aminoacyl-tRNA synthetase family. Tetramer of two alpha and two beta subunits.

Its subcellular location is the cytoplasm. The enzyme catalyses tRNA(Gly) + glycine + ATP = glycyl-tRNA(Gly) + AMP + diphosphate. The sequence is that of Glycine--tRNA ligase alpha subunit from Streptococcus agalactiae serotype Ia (strain ATCC 27591 / A909 / CDC SS700).